The sequence spans 452 residues: UPF0210 protein CHY_1509 (452 aa).

The protein belongs to the UPF0210 family. Homodimer.

This Carboxydothermus hydrogenoformans (strain ATCC BAA-161 / DSM 6008 / Z-2901) protein is UPF0210 protein CHY_1509.